Here is a 1713-residue protein sequence, read N- to C-terminus: Serine/threonine-protein kinase MRCK beta (1713 aa).

The Protein kinase domain maps to 76-342 (FEIIKVIGRG…IEDFKKHAFF (267 aa)). Residues 82 to 90 (IGRGAFGEV) and K105 contribute to the ATP site. The active-site Proton acceptor is the D200. S221 and S233 each carry phosphoserine; by autocatalysis. A Phosphothreonine; by autocatalysis modification is found at T239. The region spanning 343–413 (EGLNWENIRN…TTESCFSDRG (71 aa)) is the AGC-kinase C-terminal domain. Phosphothreonine is present on T423. The stretch at 434-649 (LENSLQIEAY…ASKERKLREH (216 aa)) forms a coiled coil. At R671 the chain carries Omega-N-methylarginine. 2 coiled-coil regions span residues 681–815 (QEIS…AHWE) and 878–939 (ELQS…FRAD). Residue S927 is modified to Phosphoserine. Y954 carries the phosphotyrosine modification. The segment covering 971 to 994 (ASDQETQASKMDLSPSVSVATSTE) has biased composition (polar residues). The segment at 971 to 1022 (ASDQETQASKMDLSPSVSVATSTEQQEDMARPQQRPSPVPLPSTQALAMAGP) is disordered. The segment at 1026-1076 (AHQFSIKSFPSPTQCSHCTSLMVGLIRQGYACEVCAFSCHVSCKDSAPQVC) adopts a Phorbol-ester/DAG-type zinc-finger fold. The PH domain maps to 1096–1215 (GTAYKGYVKV…WVGILEGLQA (120 aa)). One can recognise a CNH domain in the interval 1241–1515 (IKAVLAAAIV…RPLNSDGSLN (275 aa)). The region spanning 1585 to 1598 (ISNPTNFNHVAHMG) is the CRIB domain. The interval 1616–1713 (TVQEEKQGPT…EGLDQPSCDA (98 aa)) is disordered. Residues 1666-1677 (DFDKEPDSDSTK) show a composition bias toward basic and acidic residues. Phosphoserine is present on residues S1682, S1684, S1688, S1692, and S1695.

It belongs to the protein kinase superfamily. AGC Ser/Thr protein kinase family. DMPK subfamily. As to quaternary structure, homodimer and homotetramer via the coiled coil regions. Interacts tightly with GTP-bound but not GDP-bound CDC42. Interacts with TJP1; this interaction requires the presence of catalytically active CDC42. Forms a tripartite complex with MYO18A and LURAP1 with the latter acting as an adapter connecting CDC42BPB and MYO18A. LURAP1 binding results in activation of CDC42BPB by abolition of its negative autoregulation. Interacts with STRIP1, STRN3 and SIKE1. Interacts with CPNE4 (via VWFA domain). Interacts with LURAP1. Interacts (via AGC-kinase C-terminal domain) with FAM89B/LRAP25 (via LRR repeat). Forms a tripartite complex with FAM89B/LRAP25 and LIMK1. It depends on Mg(2+) as a cofactor. Post-translationally, proteolytically cleaved by caspases upon apoptosis induction.

The protein resides in the cytoplasm. Its subcellular location is the cell membrane. The protein localises to the cell junction. It localises to the cell projection. It is found in the lamellipodium. The enzyme catalyses L-seryl-[protein] + ATP = O-phospho-L-seryl-[protein] + ADP + H(+). It carries out the reaction L-threonyl-[protein] + ATP = O-phospho-L-threonyl-[protein] + ADP + H(+). Its activity is regulated as follows. Maintained in an inactive, closed conformation by an interaction between the kinase domain and the negative autoregulatory C-terminal coiled-coil region. Agonist binding to the phorbol ester binding site disrupts this, releasing the kinase domain to allow N-terminus-mediated dimerization and kinase activation by transautophosphorylation. Inhibited by chelerythrine chloride. In terms of biological role, serine/threonine-protein kinase which is an important downstream effector of CDC42 and plays a role in the regulation of cytoskeleton reorganization and cell migration. Regulates actin cytoskeletal reorganization via phosphorylation of PPP1R12C and MYL9/MLC2. In concert with MYO18A and LURAP1, is involved in modulating lamellar actomyosin retrograde flow that is crucial to cell protrusion and migration. Phosphorylates PPP1R12A. In concert with FAM89B/LRAP25 mediates the targeting of LIMK1 to the lamellipodium resulting in its activation and subsequent phosphorylation of CFL1 which is important for lamellipodial F-actin regulation. This Mus musculus (Mouse) protein is Serine/threonine-protein kinase MRCK beta.